An 84-amino-acid chain; its full sequence is Cell division topological specificity factor (84 aa).

It belongs to the MinE family.

Its function is as follows. Prevents the cell division inhibition by proteins MinC and MinD at internal division sites while permitting inhibition at polar sites. This ensures cell division at the proper site by restricting the formation of a division septum at the midpoint of the long axis of the cell. The protein is Cell division topological specificity factor of Pseudomonas aeruginosa (strain LESB58).